The primary structure comprises 148 residues: MPDMTSASSGTVLAFDFGKRRIGVAIGEHELRMAHPLTTIDQSMTRPRFEKIAELIEAWQPVLLVVGLSVHADGTEHEITRLCRRFARRLEGRFRIPVALADERYTTVIARSVLEEVGVTGKKQRPMLDQIAAQHILQTYFDLSHAAS.

It belongs to the YqgF nuclease family.

It is found in the cytoplasm. Functionally, could be a nuclease involved in processing of the 5'-end of pre-16S rRNA. The polypeptide is Putative pre-16S rRNA nuclease (Nitrosomonas europaea (strain ATCC 19718 / CIP 103999 / KCTC 2705 / NBRC 14298)).